The chain runs to 2120 residues: Alpha-tectorin (2120 aa).

The first 24 residues, 1-24 (MNTRSLLSAWAALLVVTVRHRAHA), serve as a signal peptide directing secretion. Asparagine 34, asparagine 215, asparagine 258, asparagine 277, asparagine 445, and asparagine 496 each carry an N-linked (GlcNAc...) asparagine glycan. Residues 98-252 (PFCGDVANGI…GRWAFKIDGR (155 aa)) enclose the NIDO domain. The VWFC domain maps to 260-312 (SLRGQFLHQGEIFWENSNCSTKCRCLDFNNEIFCQEMLAPFETVEPKIKFFQC). The VWFD 1 domain maps to 317 to 490 (TACVVFGDPH…RVPHPERKCS (174 aa)). 2 cysteine pairs are disulfide-bonded: cysteine 319–cysteine 451 and cysteine 341–cysteine 489. Positions 578–620 (PGHSHYSGCASGCPATCSDLTAPLRCTAPCPEGCECDDGHVLS) constitute a TIL 1 domain. Residues asparagine 666, asparagine 792, asparagine 822, asparagine 834, asparagine 877, asparagine 899, asparagine 907, and asparagine 928 are each glycosylated (N-linked (GlcNAc...) asparagine). Positions 690–865 (GLCSVGQNQV…SWTTFDEICN (176 aa)) constitute a VWFD 2 domain. Cysteine 692 and cysteine 828 form a disulfide bridge. The TIL 2 domain maps to 963 to 1013 (CPENSHFEECMSCVETCETLATGCCMDTCTEGCQCDEGFALRSPCVPRGEC). N-linked (GlcNAc...) asparagine glycans are attached at residues asparagine 1025, asparagine 1041, asparagine 1207, and asparagine 1337. Residues 1066–1250 (ASCIVSGYGH…SWAKRDTFCR (185 aa)) form the VWFD 3 domain. Disulfide bonds link cysteine 1068–cysteine 1213 and cysteine 1090–cysteine 1249. Positions 1345–1398 (CPPNSHYESCVSLCQPRCAAIRLKSDCGHYCVEGCQCDPGYVLNGKSCILPQNC) constitute a TIL 3 domain. Residues 1458 to 1633 (SFCLAAGGGV…KTNGMQKSCN (176 aa)) form the VWFD 4 domain. Disulfide bonds link cysteine 1460/cysteine 1594, cysteine 1482/cysteine 1632, cysteine 1684/cysteine 1742, cysteine 1708/cysteine 1751, cysteine 1753/cysteine 1785, cysteine 1773/cysteine 1865, and cysteine 1804/cysteine 1824. N-linked (GlcNAc...) asparagine glycosylation is found at asparagine 1511, asparagine 1537, asparagine 1723, asparagine 1739, asparagine 1761, asparagine 1818, asparagine 1831, asparagine 1847, asparagine 1887, and asparagine 1906. A ZP domain is found at 1772–2026 (TCKAAQMEVS…YSCKINCPQH (255 aa)). 3 disulfide bridges follow: cysteine 1947–cysteine 2007, cysteine 1968–cysteine 2023, and cysteine 2012–cysteine 2019. A lipid anchor (GPI-anchor amidated asparagine) is attached at asparagine 2058. Positions 2059-2120 (GGCEQICTSQ…LWAALHDPTS (62 aa)) are cleaved as a propeptide — removed in mature form.

May form homomeric filament after self-association or heteromeric filament after association with beta-tectorin. Post-translationally, at least 3 products of tectorin seem to exist: HMM, MMM and LMM. They may be generated by active processing or the result of proteolysis occurring between intrachain disulfide bonds. The presence of a hydrophobic C-terminus preceded by a potential cleavage site strongly suggests that tectorins are synthesized as glycosylphosphatidylinositol-linked, membrane-bound precursors. Tectorins are targeted to the apical surface of the inner ear epithelia by the lipid and proteolytically released into the extracellular compartment. Expressed in the inner ear.

It is found in the cell membrane. Its subcellular location is the secreted. It localises to the extracellular space. The protein resides in the extracellular matrix. In terms of biological role, one of the major non-collagenous components of the tectorial membrane. The tectorial membrane is an extracellular matrix of the inner ear that covers the neuroepithelium of the cochlea and contacts the stereocilia bundles of specialized sensory hair cells. Sound induces movement of these hair cells relative to the tectorial membrane, deflects the stereocilia and leads to fluctuations in hair-cell membrane potential, transducing sound into electrical signals. The protein is Alpha-tectorin (TECTA) of Gallus gallus (Chicken).